Reading from the N-terminus, the 147-residue chain is MVEWTDSERAIINSIFSNLDYEEIGRKSLCRCLIVYPWTQRYFGGFGNLYNAETILCNPLIAAHGTKILHGLDRALKNMDDIKNTYAELSLLHSDKLHVDPDNFRLLADCLTGVIAAKMVPAFTVDTQVGWQKFRSFVVSALGREYH.

The Globin domain maps to 3–147; that stretch reads EWTDSERAII…VVSALGREYH (145 aa). Heme b-binding residues include histidine 64 and histidine 93.

This sequence belongs to the globin family. As to quaternary structure, heterotetramer of two alpha chains and two beta chains. Red blood cells.

Its function is as follows. Involved in oxygen transport from gills to the various peripheral tissues. This is Hemoglobin subunit beta (hbb) from Gadus morhua (Atlantic cod).